Consider the following 422-residue polypeptide: Lactose-binding protein (422 aa).

The first 28 residues, 1-28 (MDYSRLLKRSVSAALTAAALLCSTAAFA), serve as a signal peptide directing secretion. Residues 246 to 277 (SNDGIRALTSGDVASVLRGVWITGTVKSQPDQ) form a lactose-binding region.

It belongs to the bacterial solute-binding protein 1 family.

The protein resides in the periplasm. Part of the binding-protein-dependent transport system for lactose. This Rhizobium radiobacter (Agrobacterium tumefaciens) protein is Lactose-binding protein (lacE).